The chain runs to 99 residues: MKIIKVTVVYALPKIQYICQVDIALGSTVKDAILESNLLNLTNDVSFHHNRIGIYNKTVHLKFKIKDGDRIEIYRNLTIDPKEWRRNNIFLSKKLKKIY.

Belongs to the UPF0125 (RnfH) family.

This chain is Protein RnfH, found in Buchnera aphidicola subsp. Acyrthosiphon pisum (strain 5A).